Here is a 430-residue protein sequence, read N- to C-terminus: Histidine--tRNA ligase (430 aa).

This sequence belongs to the class-II aminoacyl-tRNA synthetase family. Homodimer.

The protein resides in the cytoplasm. The catalysed reaction is tRNA(His) + L-histidine + ATP = L-histidyl-tRNA(His) + AMP + diphosphate + H(+). The chain is Histidine--tRNA ligase (hisS) from Clostridium acetobutylicum (strain ATCC 824 / DSM 792 / JCM 1419 / IAM 19013 / LMG 5710 / NBRC 13948 / NRRL B-527 / VKM B-1787 / 2291 / W).